A 537-amino-acid polypeptide reads, in one-letter code: Endoprotease aex-5 (537 aa).

The N-terminal stretch at 1–17 is a signal peptide; sequence MKLIFLLLLFGVSPIVC. A propeptide spanning residues 18–99 is cleaved from the precursor; it reads QDFEDGVFLA…KLQGFRRYKR (82 aa). The 303-residue stretch at 111 to 413 folds into the Peptidase S8 domain; the sequence is VWNLTPSLYI…FGLLNAQKLV (303 aa). The N-linked (GlcNAc...) asparagine glycan is linked to asparagine 129. Active-site charge relay system residues include aspartate 139 and histidine 178. Cysteine 286 and cysteine 316 are disulfide-bonded. Serine 346 acts as the Charge relay system in catalysis. Asparagine 380 is a glycosylation site (N-linked (GlcNAc...) asparagine). A P/Homo B domain is found at 407–537; it reads LNAQKLVVMA…KMFKVVGTMS (131 aa).

Belongs to the peptidase S8 family. Furin subfamily.

The protein localises to the secreted. In terms of biological role, probable serine endoprotease which cleaves preproteins at paired basic amino acids. May process FMRFamide-like (flp) and neuropeptide-like protein (nlp) neuropeptides. In muscles, involved in neuronal retrograde signaling by regulating presynaptic activity and localization of synaptic vesicle fusion protein unc-13 at the neuromuscular junction (NMJ). Acts in the intestine to regulate anterior body muscle contractions (aBOC) and the expulsion steps during the defecation motor program (DMP). Probably by regulating DMP, required for fatty acid uptake by intestinal cells and therefore regulates the levels of triglycerides in the intestine. Plays a role in locomotion. In Caenorhabditis elegans, this protein is Endoprotease aex-5.